Consider the following 512-residue polypeptide: Serine palmitoyltransferase 3 (512 aa).

Lys-345 is modified (N6-(pyridoxal phosphate)lysine).

This sequence belongs to the class-II pyridoxal-phosphate-dependent aminotransferase family. Heterodimer of sptl-1/sptl-3. Requires pyridoxal 5'-phosphate as cofactor.

The catalysed reaction is L-serine + hexadecanoyl-CoA + H(+) = 3-oxosphinganine + CO2 + CoA. It functions in the pathway lipid metabolism; sphingolipid metabolism. Its function is as follows. Component of the serine palmitoyltransferase (SPT) that catalyzes the first committed step in sphingolipid biosynthesis, which is the condensation of an acyl-CoA species and L-serine. The catalytic core is composed of a heterodimer of sptl-1 and sptl-2 or sptl-1 and sptl-3. Required for the specification of abicobasal polarity and development of the gut lumen. This chain is Serine palmitoyltransferase 3 (sptl-3), found in Caenorhabditis elegans.